The following is a 462-amino-acid chain: UDP-N-acetylmuramate--L-alanine ligase (462 aa).

Residue 112–118 (GTHGKTT) coordinates ATP.

This sequence belongs to the MurCDEF family.

The protein resides in the cytoplasm. It carries out the reaction UDP-N-acetyl-alpha-D-muramate + L-alanine + ATP = UDP-N-acetyl-alpha-D-muramoyl-L-alanine + ADP + phosphate + H(+). It participates in cell wall biogenesis; peptidoglycan biosynthesis. Cell wall formation. In Geobacter sulfurreducens (strain ATCC 51573 / DSM 12127 / PCA), this protein is UDP-N-acetylmuramate--L-alanine ligase.